We begin with the raw amino-acid sequence, 313 residues long: tRNA uridine(34) hydroxylase (313 aa).

The Rhodanese domain maps to 127–225 (SDPDTILIDT…YLETVPEEES (99 aa)). Catalysis depends on cysteine 185, which acts as the Cysteine persulfide intermediate.

This sequence belongs to the TrhO family.

The catalysed reaction is uridine(34) in tRNA + AH2 + O2 = 5-hydroxyuridine(34) in tRNA + A + H2O. In terms of biological role, catalyzes oxygen-dependent 5-hydroxyuridine (ho5U) modification at position 34 in tRNAs. This chain is tRNA uridine(34) hydroxylase, found in Gluconobacter oxydans (strain 621H) (Gluconobacter suboxydans).